The primary structure comprises 1358 residues: DNA-directed RNA polymerase subunit beta (1358 aa).

Belongs to the RNA polymerase beta chain family. The RNAP catalytic core consists of 2 alpha, 1 beta, 1 beta' and 1 omega subunit. When a sigma factor is associated with the core the holoenzyme is formed, which can initiate transcription.

It catalyses the reaction RNA(n) + a ribonucleoside 5'-triphosphate = RNA(n+1) + diphosphate. DNA-dependent RNA polymerase catalyzes the transcription of DNA into RNA using the four ribonucleoside triphosphates as substrates. This is DNA-directed RNA polymerase subunit beta from Neorickettsia sennetsu (strain ATCC VR-367 / Miyayama) (Ehrlichia sennetsu).